The chain runs to 508 residues: Serine carboxypeptidase 3 (508 aa).

Positions 1–19 (MVTTPRLVSLLLLLALCAA) are cleaved as a signal peptide. Residues 20–80 (AAGALRLPPD…PGQLLERRVT (61 aa)) constitute a propeptide that is removed on maturation. Residues 48-67 (PKDSSSSSGRHGARVGEGNE) are disordered. Leu81 is modified (blocked amino end (Leu)). Disulfide bonds link Cys133/Cys373, Cys301/Cys316, and Cys339/Cys344. An N-linked (GlcNAc...) asparagine glycan is attached at Asn151. Ser223 is a catalytic residue. The active site involves Asp411. Cys414 is a substrate binding site. His468 is an active-site residue. Residues 492–508 (EAVPEEESSTTSFYAAM) constitute a propeptide that is removed on maturation.

Belongs to the peptidase S10 family. As to quaternary structure, monomer.

It localises to the secreted. It carries out the reaction Release of a C-terminal amino acid with broad specificity.. Inhibited by mercuric ions. This Hordeum vulgare (Barley) protein is Serine carboxypeptidase 3 (CBP3).